Here is a 203-residue protein sequence, read N- to C-terminus: Holliday junction branch migration complex subunit RuvA (203 aa).

The tract at residues 1–63 (MIGKLSGRVD…EDHINLYGFL (63 aa)) is domain I. The interval 64–142 (SLEEKSFFNL…KISSSSAAIK (79 aa)) is domain II. A flexible linker region spans residues 143-149 (DSLNIKG). The interval 150 to 203 (ITPVASSEVIKALINMGFSRFEAQNAVQEIITKNPEISIDELIRTALKNRNSNF) is domain III.

Belongs to the RuvA family. As to quaternary structure, homotetramer. Forms an RuvA(8)-RuvB(12)-Holliday junction (HJ) complex. HJ DNA is sandwiched between 2 RuvA tetramers; dsDNA enters through RuvA and exits via RuvB. An RuvB hexamer assembles on each DNA strand where it exits the tetramer. Each RuvB hexamer is contacted by two RuvA subunits (via domain III) on 2 adjacent RuvB subunits; this complex drives branch migration. In the full resolvosome a probable DNA-RuvA(4)-RuvB(12)-RuvC(2) complex forms which resolves the HJ.

It is found in the cytoplasm. Functionally, the RuvA-RuvB-RuvC complex processes Holliday junction (HJ) DNA during genetic recombination and DNA repair, while the RuvA-RuvB complex plays an important role in the rescue of blocked DNA replication forks via replication fork reversal (RFR). RuvA specifically binds to HJ cruciform DNA, conferring on it an open structure. The RuvB hexamer acts as an ATP-dependent pump, pulling dsDNA into and through the RuvAB complex. HJ branch migration allows RuvC to scan DNA until it finds its consensus sequence, where it cleaves and resolves the cruciform DNA. In Rickettsia bellii (strain OSU 85-389), this protein is Holliday junction branch migration complex subunit RuvA.